A 1744-amino-acid polypeptide reads, in one-letter code: Tensin-1 (1744 aa).

The disordered stretch occupies residues 15 to 55 (SPAVNYELPSPGQSITKQVDTPDATRSPRGGQAHRKASRSM). In terms of domain architecture, Phosphatase tensin-type spans 58-230 (TAAMESSCEL…HYFSGLLSGS (173 aa)). The 127-residue stretch at 235-361 (NKPLFLHHVI…GKVEFVFSYG (127 aa)) folds into the C2 tensin-type domain. Disordered stretches follow at residues 467–505 (TLSVSSDSGNSTASTKTDRTDEPGAPGAPTGHAVLSPEE), 569–589 (DELPNQDGHSVGSLGTLSSLD), 666–686 (AQEHLAGYPQRQPASTSPAWL), 724–797 (PQAP…APSR), 934–956 (GSQQLLVSSPPSPTAPAQSQLPH), 982–1077 (RVAG…PGLA), and 1156–1437 (VPSP…GSAV). A compositionally biased stretch (polar residues) spans 468–481 (LSVSSDSGNSTAST). Positions 580–589 (GSLGTLSSLD) are enriched in low complexity. Residues 728-753 (ARSTSSREAVQRGLNSWQQQGGSRPP) show a composition bias toward polar residues. A compositionally biased stretch (low complexity) spans 763-773 (SHSPSLSSCSP). Positions 774–783 (QPSPLQPMPP) are enriched in pro residues. 2 stretches are compositionally biased toward basic and acidic residues: residues 1004-1014 (TPSDSHYEKSS) and 1041-1054 (RPKEPHLHSYKEAF). Positions 1060–1069 (ASPSSLTSGG) are enriched in polar residues. 2 stretches are compositionally biased toward low complexity: residues 1156–1169 (VPSPVSTSSPIHSV) and 1208–1220 (SAHSSYQTSSPSS). 3 stretches are compositionally biased toward polar residues: residues 1344 to 1355 (LSRQSSASGYQP), 1370 to 1380 (GTSTPHSSSPD), and 1405 to 1420 (ERSNSLPNYATVNGKA). The segment covering 1421 to 1435 (SSPLSSGMSSPSSGS) has biased composition (low complexity). The 110-residue stretch at 1472-1581 (WYKPDISREQ…ALPCKLVIPD (110 aa)) folds into the SH2 domain. The PTB domain occupies 1607–1743 (ACNVLFINSV…SRVMLGSGQK (137 aa)).

This sequence belongs to the PTEN phosphatase protein family. Binds to actin filaments. Interacts with phosphotyrosine-containing proteins. In terms of processing, tyrosine phosphorylated. Heart, gizzard, lung and skeletal muscle.

It is found in the cell surface. The protein resides in the cell junction. It localises to the focal adhesion. The protein localises to the cytoplasm. Its subcellular location is the cytoskeleton. Its function is as follows. May act as a protein phosphatase and/or a lipid phosphatase. Involved in fibrillar adhesion formation. Plays a role in cell polarization and migration. May be involved in cartilage development and in linking signal transduction pathways to the cytoskeleton. This is Tensin-1 (TNS1) from Gallus gallus (Chicken).